We begin with the raw amino-acid sequence, 31 residues long: Photosystem II reaction center protein T (31 aa).

The helical transmembrane segment at 3 to 23 (SFAYVLILTFAIATLFFAIAF) threads the bilayer.

This sequence belongs to the PsbT family. As to quaternary structure, PSII is composed of 1 copy each of membrane proteins PsbA, PsbB, PsbC, PsbD, PsbE, PsbF, PsbH, PsbI, PsbJ, PsbK, PsbL, PsbM, PsbT, PsbX, PsbY, PsbZ, Psb30/Ycf12, peripheral proteins PsbO, CyanoQ (PsbQ), PsbU, PsbV and a large number of cofactors. It forms dimeric complexes.

The protein resides in the cellular thylakoid membrane. In terms of biological role, found at the monomer-monomer interface of the photosystem II (PS II) dimer, plays a role in assembly and dimerization of PSII. PSII is a light-driven water plastoquinone oxidoreductase, using light energy to abstract electrons from H(2)O, generating a proton gradient subsequently used for ATP formation. This is Photosystem II reaction center protein T from Synechococcus sp. (strain CC9902).